Reading from the N-terminus, the 63-residue chain is Anionic peptide 10.1 (63 aa).

The first 20 residues, 1–20, serve as a signal peptide directing secretion; sequence MISRFCLLFLLVFVVSKIQA.

It belongs to the non-disulfide-bridged peptide (NDBP) superfamily. Long chain multifunctional peptide (group 2) family. As to expression, expressed by the venom gland.

The protein localises to the secreted. The polypeptide is Anionic peptide 10.1 (Lychas mucronatus (Chinese swimming scorpion)).